Here is a 59-residue protein sequence, read N- to C-terminus: Large ribosomal subunit protein bL32 (59 aa).

Belongs to the bacterial ribosomal protein bL32 family.

In Rhizorhabdus wittichii (strain DSM 6014 / CCUG 31198 / JCM 15750 / NBRC 105917 / EY 4224 / RW1) (Sphingomonas wittichii), this protein is Large ribosomal subunit protein bL32.